Here is a 362-residue protein sequence, read N- to C-terminus: Spermidine/putrescine import ATP-binding protein PotA (362 aa).

The ABC transporter domain occupies 4 to 235 (IKLDHITKQY…PVNDFVARFI (232 aa)). 37–44 (GPSGSGKT) contacts ATP.

The protein belongs to the ABC transporter superfamily. Spermidine/putrescine importer (TC 3.A.1.11.1) family. As to quaternary structure, the complex is composed of two ATP-binding proteins (PotA), two transmembrane proteins (PotB and PotC) and a solute-binding protein (PotD).

The protein localises to the cell membrane. The enzyme catalyses ATP + H2O + polyamine-[polyamine-binding protein]Side 1 = ADP + phosphate + polyamineSide 2 + [polyamine-binding protein]Side 1.. Functionally, part of the ABC transporter complex PotABCD involved in spermidine/putrescine import. Responsible for energy coupling to the transport system. This is Spermidine/putrescine import ATP-binding protein PotA from Lactobacillus delbrueckii subsp. bulgaricus (strain ATCC 11842 / DSM 20081 / BCRC 10696 / JCM 1002 / NBRC 13953 / NCIMB 11778 / NCTC 12712 / WDCM 00102 / Lb 14).